Reading from the N-terminus, the 279-residue chain is Coiled-coil domain-containing protein 117 (279 aa).

The interval 1–82 is disordered; that stretch reads MAALGRPFSG…REEEEDDDCP (82 aa). Arg48 carries the omega-N-methylarginine modification. Ser53 bears the Phosphoserine mark. The span at 63–72 shows a compositional bias: basic residues; sequence VSVHCKKKHK. Residues 141 to 168 are a coiled coil; the sequence is QCEVARRKLQEIEDRIIDEDEEVEADRN. Residues 217–279 form a disordered region; sequence LLSDKPKPSS…ATSTEEEMEL (63 aa). Polar residues-rich tracts occupy residues 224 to 235 and 262 to 272; these read PSSNTKNYTGES and SLYNSLETATS.

In terms of assembly, interacts with CIAO2B; the interaction is direct. Interacts with MMS19; the interaction is indirect.

The protein resides in the cytoplasm. The protein localises to the cytoskeleton. Its subcellular location is the spindle. It localises to the nucleus. In terms of biological role, facilitates DNA repair, cell cycle progression, and cell proliferation through its interaction with CIAO2B. The sequence is that of Coiled-coil domain-containing protein 117 from Homo sapiens (Human).